Here is a 308-residue protein sequence, read N- to C-terminus: Ornithine carbamoyltransferase (308 aa).

Carbamoyl phosphate-binding positions include 51–54 (STRT), glutamine 78, arginine 102, and 129–132 (HPTQ). Residues asparagine 160, aspartate 224, and 228-229 (SM) each bind L-ornithine. Carbamoyl phosphate is bound by residues 264–265 (CL) and arginine 292.

Belongs to the aspartate/ornithine carbamoyltransferase superfamily. OTCase family.

It is found in the cytoplasm. The catalysed reaction is carbamoyl phosphate + L-ornithine = L-citrulline + phosphate + H(+). It functions in the pathway amino-acid biosynthesis; L-arginine biosynthesis; L-arginine from L-ornithine and carbamoyl phosphate: step 1/3. Its function is as follows. Reversibly catalyzes the transfer of the carbamoyl group from carbamoyl phosphate (CP) to the N(epsilon) atom of ornithine (ORN) to produce L-citrulline. This chain is Ornithine carbamoyltransferase, found in Caldicellulosiruptor saccharolyticus (strain ATCC 43494 / DSM 8903 / Tp8T 6331).